Here is a 1228-residue protein sequence, read N- to C-terminus: DNA-directed RNA polymerase subunit beta (1228 aa).

It belongs to the RNA polymerase beta chain family. As to quaternary structure, the RNAP catalytic core consists of 2 alpha, 1 beta, 1 beta' and 1 omega subunit. When a sigma factor is associated with the core the holoenzyme is formed, which can initiate transcription.

It carries out the reaction RNA(n) + a ribonucleoside 5'-triphosphate = RNA(n+1) + diphosphate. DNA-dependent RNA polymerase catalyzes the transcription of DNA into RNA using the four ribonucleoside triphosphates as substrates. This is DNA-directed RNA polymerase subunit beta from Leptospira biflexa.